Here is a 432-residue protein sequence, read N- to C-terminus: Peptidase B (432 aa).

Mn(2+) contacts are provided by Lys196 and Asp201. Residue Lys208 is part of the active site. Positions 219, 278, and 280 each coordinate Mn(2+). The active site involves Arg282.

Belongs to the peptidase M17 family. In terms of assembly, homohexamer. Requires Mn(2+) as cofactor.

The protein localises to the cytoplasm. The enzyme catalyses Release of an N-terminal amino acid, Xaa, from a peptide or arylamide. Xaa is preferably Glu or Asp but may be other amino acids, including Leu, Met, His, Cys and Gln.. Functionally, probably plays an important role in intracellular peptide degradation. This is Peptidase B from Yersinia pseudotuberculosis serotype IB (strain PB1/+).